Consider the following 127-residue polypeptide: Large ribosomal subunit protein uL18 (127 aa).

It belongs to the universal ribosomal protein uL18 family. As to quaternary structure, part of the 50S ribosomal subunit; part of the 5S rRNA/L5/L18/L25 subcomplex. Contacts the 5S and 23S rRNAs.

Functionally, this is one of the proteins that bind and probably mediate the attachment of the 5S RNA into the large ribosomal subunit, where it forms part of the central protuberance. In Streptomyces coelicolor (strain ATCC BAA-471 / A3(2) / M145), this protein is Large ribosomal subunit protein uL18.